A 420-amino-acid polypeptide reads, in one-letter code: Protein-lysine 6-oxidase (420 aa).

Positions 1-27 are cleaved as a signal peptide; sequence MRCAPPGLLLAQLHACIFWSGLWPAGC. Residues 28–171 constitute a propeptide, removed by BMP1; it reads QSPPAAWRQR…RPGREDVMVG (144 aa). The disordered stretch occupies residues 54 to 177; that stretch reads AQYQPPRRRQ…VMVGDDPYSP (124 aa). Asn-78 carries an N-linked (GlcNAc...) asparagine glycan. Positions 82–92 are enriched in low complexity; the sequence is PRAAAAAAARP. Positions 93–105 are enriched in pro residues; that stretch reads QPEPQPQAQPQPR. Composition is skewed to basic residues over residues 107-119 and 134-147; these read RSSRRQPLGRRHW and APRRRPRGRRSRRR. The residue at position 190 (Tyr-190) is a Sulfotyrosine. The tract at residues 216–420 is lysyl-oxidase like; that stretch reads PDLVPDPYYI…YASGCTISPY (205 aa). 5 disulfides stabilise this stretch: Cys-241–Cys-247, Cys-294–Cys-343, Cys-327–Cys-333, Cys-354–Cys-364, and Cys-401–Cys-415. Cu cation contacts are provided by His-295, His-297, and His-299. A cross-link (lysine tyrosylquinone (Lys-Tyr)) is located at residues 323–358; the sequence is KASFCLEDTSCDYGYYRRYACTAHTQGLSPGCYDTY. Tyr-358 carries the 2',4',5'-topaquinone modification.

This sequence belongs to the lysyl oxidase family. Requires Cu cation as cofactor. The cofactor is lysine tyrosylquinone residue. The lysine tyrosylquinone cross-link (LTQ) is generated by condensation of the epsilon-amino group of a lysine with a topaquinone produced by oxidation of tyrosine. In terms of processing, proteolytically cleaved by BMP1 which removes the propeptide. Also proteolytically cleaved by ADAMTS2 and ADAMTS14, but not by ADAMTS3, at an additional cleavage site downstream of the BMP1 cleavage site. The propeptide plays a role in directing the deposition of this enzyme to elastic fibers, via interaction with tropoelastin. Cleavage by BMP1 to remove the propeptide does not increase enzymatic activity but increases binding to collagen. Cleavage by ADAMTS2 produces a form with reduced collagen-binding activity. Post-translationally, sulfated at Tyr-190 and also at either Tyr-186 or Tyr-187 which enhances binding to collagen.

Its subcellular location is the secreted. The protein localises to the extracellular space. The enzyme catalyses L-lysyl-[protein] + O2 + H2O = (S)-2-amino-6-oxohexanoyl-[protein] + H2O2 + NH4(+). In terms of biological role, responsible for the post-translational oxidative deamination of peptidyl lysine residues in precursors to fibrous collagen and elastin. Its function is as follows. In addition to cross linking of extracellular matrix proteins, it may have a direct role in tumor suppression. The protein is Protein-lysine 6-oxidase (LOX) of Gallus gallus (Chicken).